The sequence spans 147 residues: UPF0306 protein YhbP (147 aa).

This sequence belongs to the UPF0306 family.

This chain is UPF0306 protein YhbP, found in Escherichia coli (strain SMS-3-5 / SECEC).